A 78-amino-acid chain; its full sequence is Putative permease-like protein YdzE (78 aa).

Helical transmembrane passes span 2 to 22 (YLGI…LQLL), 27 to 47 (GGLF…ILLG), and 49 to 69 (QIGG…LLVI). Residues 2–70 (YLGIVSTACA…ILSGVLLVIK (69 aa)) enclose the EamA domain.

The protein belongs to the EamA transporter family.

Its subcellular location is the cell membrane. The protein is Putative permease-like protein YdzE (ydzE) of Bacillus subtilis (strain 168).